The following is a 72-amino-acid chain: Translation initiation factor IF-1 (72 aa).

Residues 1–72 (MSKQDVIEVE…TRGRIVYRYK (72 aa)) enclose the S1-like domain.

This sequence belongs to the IF-1 family. In terms of assembly, component of the 30S ribosomal translation pre-initiation complex which assembles on the 30S ribosome in the order IF-2 and IF-3, IF-1 and N-formylmethionyl-tRNA(fMet); mRNA recruitment can occur at any time during PIC assembly.

Its subcellular location is the cytoplasm. One of the essential components for the initiation of protein synthesis. Stabilizes the binding of IF-2 and IF-3 on the 30S subunit to which N-formylmethionyl-tRNA(fMet) subsequently binds. Helps modulate mRNA selection, yielding the 30S pre-initiation complex (PIC). Upon addition of the 50S ribosomal subunit IF-1, IF-2 and IF-3 are released leaving the mature 70S translation initiation complex. This is Translation initiation factor IF-1 from Pelotomaculum thermopropionicum (strain DSM 13744 / JCM 10971 / SI).